A 262-amino-acid polypeptide reads, in one-letter code: MSLSSSVTKHLISASILAIVAMQLPSVHSVLSLNETNAYLHHICINGEGTFKSGSPYEKEIKQLIDFLSSFIKDYSFVHGVSGIGPDDINVKFQCRGDTLQAKCRSCLATAFSEIRSKCPNNKGRIIWYDNCHLDLSSIYTYGQIDYKNNFYMYNAKDVRGDKKSFYKNMKAFLHKLKAKASSKENKPYVKDYMYAAGRESLGTVKLYAMVQCTQDLSLKNCTVCLDWIMTKLPECCNGKQGGRVLSPSCNFRYELYPFVEN.

The signal sequence occupies residues 1–29 (MSLSSSVTKHLISASILAIVAMQLPSVHS). Gnk2-homologous domains lie at 39–141 (YLHH…SIYT) and 147–259 (YKNN…LYPF).

Belongs to the cysteine-rich repeat secretory protein family.

Its subcellular location is the secreted. The chain is Putative cysteine-rich repeat secretory protein 24 (CRRSP24) from Arabidopsis thaliana (Mouse-ear cress).